Reading from the N-terminus, the 398-residue chain is Galactose-3-O-sulfotransferase 2 (398 aa).

The Cytoplasmic portion of the chain corresponds to 1-10 (MMSMLGGLQR). A helical; Signal-anchor for type II membrane protein transmembrane segment spans residues 11 to 31 (YFRVILLLLLALTLLLLAGFL). The Lumenal portion of the chain corresponds to 32–398 (HSDLELDTPL…PLKNIPFLGA (367 aa)). N-linked (GlcNAc...) asparagine glycosylation is found at asparagine 79, asparagine 132, asparagine 179, asparagine 287, asparagine 330, and asparagine 360.

The protein belongs to the galactose-3-O-sulfotransferase family. As to expression, ubiquitous. Detected in heart, stomach, colon, liver and spleen, in epithelial cells lining the lower to middle layer of the crypts in colonic mucosa, hepatocytes surrounding the central vein of the liver, extravillous cytotrophoblasts in the basal plate of the septum of the placenta, renal tubules of the kidney, and neuronal cells of the cerebral cortex.

The protein localises to the golgi apparatus. It is found in the golgi stack membrane. It functions in the pathway protein modification; carbohydrate sulfation. Its activity is regulated as follows. Strongly inhibited by Cu(2+) and Zn(2+). Transfers a sulfate group to the hydroxyl group at C3 of non-reducing beta-galactosyl residues. Acts both on type 1 (Gal-beta-1,3-GlcNAc) and type 2 (Gal-beta-1,4-GlcNAc) chains with similar efficiency. The chain is Galactose-3-O-sulfotransferase 2 (GAL3ST2) from Homo sapiens (Human).